A 204-amino-acid polypeptide reads, in one-letter code: Superoxide dismutase [Mn] (204 aa).

Residue His-27 participates in Mn(2+) binding. 2 positions are modified to phosphothreonine: Thr-34 and Thr-70. Mn(2+) contacts are provided by His-82, Asp-164, and His-168.

Belongs to the iron/manganese superoxide dismutase family. As to quaternary structure, homodimer. Mn(2+) is required as a cofactor.

The catalysed reaction is 2 superoxide + 2 H(+) = H2O2 + O2. Functionally, destroys superoxide anion radicals which are normally produced within the cells and which are toxic to biological systems. This is Superoxide dismutase [Mn] (sodA) from Bacillus caldotenax.